Consider the following 433-residue polypeptide: Xylose isomerase (433 aa).

Active-site residues include His99 and Asp102. Positions 230, 266, 269, 294, 305, 307, and 337 each coordinate Mg(2+).

It belongs to the xylose isomerase family. As to quaternary structure, homotetramer. The cofactor is Mg(2+).

The protein resides in the cytoplasm. It catalyses the reaction alpha-D-xylose = alpha-D-xylulofuranose. In Roseobacter denitrificans (strain ATCC 33942 / OCh 114) (Erythrobacter sp. (strain OCh 114)), this protein is Xylose isomerase.